We begin with the raw amino-acid sequence, 453 residues long: Phosphomannomutase (453 aa).

Ser96 functions as the Phosphoserine intermediate in the catalytic mechanism. Mg(2+)-binding residues include Ser96, Asp243, Asp245, and Asp247.

The protein belongs to the phosphohexose mutase family. The cofactor is Mg(2+).

The catalysed reaction is alpha-D-mannose 1-phosphate = D-mannose 6-phosphate. It participates in nucleotide-sugar biosynthesis; GDP-alpha-D-mannose biosynthesis; alpha-D-mannose 1-phosphate from D-fructose 6-phosphate: step 2/2. It functions in the pathway bacterial outer membrane biogenesis; LPS O-antigen biosynthesis. Involved in GDP-mannose biosynthesis which serves as the activated sugar nucleotide precursor for mannose residues in cell surface polysaccharides. This enzyme participates in synthesis of the LPS O7 antigen. This Escherichia coli protein is Phosphomannomutase (manB).